The sequence spans 152 residues: Sec-independent protein translocase protein TatB (152 aa).

A helical membrane pass occupies residues 1-21; sequence MFDLGWSELLVIGVVALIVVG.

It belongs to the TatB family. The Tat system comprises two distinct complexes: a TatABC complex, containing multiple copies of TatA, TatB and TatC subunits, and a separate TatA complex, containing only TatA subunits. Substrates initially bind to the TatABC complex, which probably triggers association of the separate TatA complex to form the active translocon.

The protein localises to the cell inner membrane. Its function is as follows. Part of the twin-arginine translocation (Tat) system that transports large folded proteins containing a characteristic twin-arginine motif in their signal peptide across membranes. Together with TatC, TatB is part of a receptor directly interacting with Tat signal peptides. TatB may form an oligomeric binding site that transiently accommodates folded Tat precursor proteins before their translocation. The polypeptide is Sec-independent protein translocase protein TatB (Ruegeria pomeroyi (strain ATCC 700808 / DSM 15171 / DSS-3) (Silicibacter pomeroyi)).